The primary structure comprises 251 residues: Appressoria-specific virulence factor GAS1 (251 aa).

An N-terminal signal peptide occupies residues 1-21 (MSLKSLIAATILAAPLVAGHG). The segment at 40–76 (VTSTPRDGTRRDPFQQDSTRFKGQQADTFGETVGGGQ) is disordered. The span at 54–66 (QQDSTRFKGQQAD) shows a compositional bias: polar residues.

The protein localises to the cytoplasm. Functionally, appressoria-specific virulence factor required for appressorial penetration in host and lesion development. The chain is Appressoria-specific virulence factor GAS1 from Pyricularia oryzae (strain 70-15 / ATCC MYA-4617 / FGSC 8958) (Rice blast fungus).